Here is a 192-residue protein sequence, read N- to C-terminus: Phosphomevalonate kinase (192 aa).

Residues 17 to 23 and arginine 141 contribute to the ATP site; that span reads KRKSGKD. Asparagine 170 provides a ligand contact to substrate. ATP is bound by residues histidine 171 and glutamine 180.

Monomer.

The protein localises to the cytoplasm. It is found in the cytosol. It catalyses the reaction (R)-5-phosphomevalonate + ATP = (R)-5-diphosphomevalonate + ADP. It participates in isoprenoid biosynthesis; isopentenyl diphosphate biosynthesis via mevalonate pathway; isopentenyl diphosphate from (R)-mevalonate: step 2/3. Its function is as follows. Catalyzes the reversible ATP-dependent phosphorylation of mevalonate 5-phosphate to produce mevalonate diphosphate and ADP, a key step in the mevalonic acid mediated biosynthesis of isopentenyl diphosphate and other polyisoprenoid metabolites. This is Phosphomevalonate kinase (PMVK) from Bos taurus (Bovine).